We begin with the raw amino-acid sequence, 363 residues long: Trans-2,3-enoyl-CoA reductase-like (363 aa).

Serine 37 is subject to Phosphoserine. 3 helical membrane passes run 143 to 163, 217 to 237, and 311 to 331; these read WTTV…LFYL, LIMS…YINH, and ISFT…LMSI.

The protein belongs to the steroid 5-alpha reductase family. Predominantly expressed in the heart and skeletal muscle.

The protein localises to the membrane. The protein resides in the endoplasmic reticulum. The protein is Trans-2,3-enoyl-CoA reductase-like (TECRL) of Homo sapiens (Human).